We begin with the raw amino-acid sequence, 433 residues long: Adenylosuccinate synthetase (433 aa).

GTP is bound by residues 13-19 and 41-43; these read GDEGKGK and GHT. The active-site Proton acceptor is the Asp-14. Mg(2+) is bound by residues Asp-14 and Gly-41. Residues 14–17, 39–42, Thr-130, Arg-144, Gln-225, Thr-240, and Arg-304 each bind IMP; these read DEGK and NAGH. The active-site Proton donor is His-42. 300 to 306 is a substrate binding site; it reads STTGRKR. GTP-binding positions include Arg-306, 332-334, and 414-416; these read KLD and STG.

The protein belongs to the adenylosuccinate synthetase family. As to quaternary structure, homodimer. Mg(2+) is required as a cofactor.

It is found in the cytoplasm. It catalyses the reaction IMP + L-aspartate + GTP = N(6)-(1,2-dicarboxyethyl)-AMP + GDP + phosphate + 2 H(+). It functions in the pathway purine metabolism; AMP biosynthesis via de novo pathway; AMP from IMP: step 1/2. In terms of biological role, plays an important role in the de novo pathway of purine nucleotide biosynthesis. Catalyzes the first committed step in the biosynthesis of AMP from IMP. This Buchnera aphidicola subsp. Acyrthosiphon pisum (strain APS) (Acyrthosiphon pisum symbiotic bacterium) protein is Adenylosuccinate synthetase.